A 753-amino-acid chain; its full sequence is Neuroendocrine convertase 1 (753 aa).

A signal peptide spans 1–27 (MGRRAWTLQCTAFSLFCAWCAMNSVKA). Residues 28 to 110 (KKQFVNEWAA…QQYEKERSKR (83 aa)) constitute a propeptide that is removed on maturation. A Peptidase S8 domain is found at 129–450 (QWYLQDTRMT…FGLLNAKALV (322 aa)). D167 functions as the Charge relay system in the catalytic mechanism. A glycan (N-linked (GlcNAc...) asparagine) is linked at N173. Residue H208 is the Charge relay system of the active site. Intrachain disulfides connect C225-C374 and C317-C347. S382 acts as the Charge relay system in catalysis. Residue N401 is glycosylated (N-linked (GlcNAc...) asparagine). Residues 460–597 (SVPEKKECVV…KLILHGTSSQ (138 aa)) enclose the P/Homo B domain. A disulfide bridge links C467 with C494. 2 disordered regions span residues 617–657 (RRGV…RRDE) and 676–695 (SKNSPSKQSPKKPPSAKPNI).

This sequence belongs to the peptidase S8 family. Furin subfamily. Ca(2+) is required as a cofactor.

It localises to the cytoplasmic vesicle. The protein resides in the secretory vesicle. It carries out the reaction Release of protein hormones, neuropeptides and renin from their precursors, generally by hydrolysis of -Lys-Arg-|- bonds.. In terms of biological role, involved in the processing of hormone and other protein precursors at sites comprised of pairs of basic amino acid residues. Substrates include POMC, renin, enkephalin, dynorphin, somatostatin, insulin and AGRP. The polypeptide is Neuroendocrine convertase 1 (PCSK1) (Bos taurus (Bovine)).